Here is a 1184-residue protein sequence, read N- to C-terminus: DNA-directed RNA polymerase subunit beta' (1184 aa).

Zn(2+) is bound by residues cysteine 60, cysteine 62, cysteine 75, and cysteine 78. Residues aspartate 449, aspartate 451, and aspartate 453 each coordinate Mg(2+). Zn(2+) is bound by residues cysteine 794, cysteine 867, cysteine 874, and cysteine 877.

It belongs to the RNA polymerase beta' chain family. In terms of assembly, the RNAP catalytic core consists of 2 alpha, 1 beta, 1 beta' and 1 omega subunit. When a sigma factor is associated with the core the holoenzyme is formed, which can initiate transcription. It depends on Mg(2+) as a cofactor. Zn(2+) serves as cofactor.

The enzyme catalyses RNA(n) + a ribonucleoside 5'-triphosphate = RNA(n+1) + diphosphate. DNA-dependent RNA polymerase catalyzes the transcription of DNA into RNA using the four ribonucleoside triphosphates as substrates. This chain is DNA-directed RNA polymerase subunit beta', found in Thermoanaerobacter sp. (strain X514).